A 382-amino-acid polypeptide reads, in one-letter code: Anhydro-N-acetylmuramic acid kinase (382 aa).

Residue 18–25 participates in ATP binding; sequence GTSLDGVD.

Belongs to the anhydro-N-acetylmuramic acid kinase family.

It carries out the reaction 1,6-anhydro-N-acetyl-beta-muramate + ATP + H2O = N-acetyl-D-muramate 6-phosphate + ADP + H(+). It participates in amino-sugar metabolism; 1,6-anhydro-N-acetylmuramate degradation. The protein operates within cell wall biogenesis; peptidoglycan recycling. Its function is as follows. Catalyzes the specific phosphorylation of 1,6-anhydro-N-acetylmuramic acid (anhMurNAc) with the simultaneous cleavage of the 1,6-anhydro ring, generating MurNAc-6-P. Is required for the utilization of anhMurNAc either imported from the medium or derived from its own cell wall murein, and thus plays a role in cell wall recycling. The polypeptide is Anhydro-N-acetylmuramic acid kinase (Ralstonia nicotianae (strain ATCC BAA-1114 / GMI1000) (Ralstonia solanacearum)).